The following is a 226-amino-acid chain: Leucyl/phenylalanyl-tRNA--protein transferase (226 aa).

This sequence belongs to the L/F-transferase family.

The protein resides in the cytoplasm. It carries out the reaction N-terminal L-lysyl-[protein] + L-leucyl-tRNA(Leu) = N-terminal L-leucyl-L-lysyl-[protein] + tRNA(Leu) + H(+). The enzyme catalyses N-terminal L-arginyl-[protein] + L-leucyl-tRNA(Leu) = N-terminal L-leucyl-L-arginyl-[protein] + tRNA(Leu) + H(+). It catalyses the reaction L-phenylalanyl-tRNA(Phe) + an N-terminal L-alpha-aminoacyl-[protein] = an N-terminal L-phenylalanyl-L-alpha-aminoacyl-[protein] + tRNA(Phe). In terms of biological role, functions in the N-end rule pathway of protein degradation where it conjugates Leu, Phe and, less efficiently, Met from aminoacyl-tRNAs to the N-termini of proteins containing an N-terminal arginine or lysine. In Pseudomonas fluorescens (strain Pf0-1), this protein is Leucyl/phenylalanyl-tRNA--protein transferase.